Reading from the N-terminus, the 232-residue chain is LexA repressor (232 aa).

Residues 26-46 (FDEMKDALDLRSKSGIHRLIT) constitute a DNA-binding region (H-T-H motif). Active-site for autocatalytic cleavage activity residues include S153 and K191.

This sequence belongs to the peptidase S24 family. As to quaternary structure, homodimer.

It carries out the reaction Hydrolysis of Ala-|-Gly bond in repressor LexA.. Its function is as follows. Represses a number of genes involved in the response to DNA damage (SOS response), including recA and lexA. In the presence of single-stranded DNA, RecA interacts with LexA causing an autocatalytic cleavage which disrupts the DNA-binding part of LexA, leading to derepression of the SOS regulon and eventually DNA repair. The protein is LexA repressor of Bradyrhizobium sp. (strain BTAi1 / ATCC BAA-1182).